The following is a 432-amino-acid chain: Anaerobic glycerol-3-phosphate dehydrogenase subunit B (432 aa).

This sequence belongs to the anaerobic G-3-P dehydrogenase subunit B family. As to quaternary structure, composed of a catalytic GlpA/B dimer and of membrane bound GlpC. FMN is required as a cofactor.

The enzyme catalyses a quinone + sn-glycerol 3-phosphate = dihydroxyacetone phosphate + a quinol. The protein operates within polyol metabolism; glycerol degradation via glycerol kinase pathway; glycerone phosphate from sn-glycerol 3-phosphate (anaerobic route): step 1/1. In terms of biological role, conversion of glycerol 3-phosphate to dihydroxyacetone. Uses fumarate or nitrate as electron acceptor. In Haemophilus influenzae (strain PittEE), this protein is Anaerobic glycerol-3-phosphate dehydrogenase subunit B.